The primary structure comprises 472 residues: Nuclear hormone receptor family member nhr-2 (472 aa).

Composition is skewed to polar residues over residues 57–83 (TATN…LSQI), 90–112 (NDTI…HNQP), 138–147 (LSSTQSSPDN), and 159–171 (VRRN…SAST). Disordered stretches follow at residues 57-112 (TATN…HNQP) and 138-184 (LSST…RTNT). A DNA-binding region (nuclear receptor) is located at residues 215–297 (KDRCMVCGDN…VGMNRDNVRV (83 aa)). 2 NR C4-type zinc fingers span residues 218 to 238 (CMVC…CEGC) and 267 to 285 (CAAN…FAKC).

Belongs to the nuclear hormone receptor family.

The protein resides in the nucleus. Its function is as follows. Orphan nuclear receptor. This is Nuclear hormone receptor family member nhr-2 (nhr-2) from Caenorhabditis elegans.